The following is a 400-amino-acid chain: MTQFASPVLHSLLDTDAYKLHMQQAVFHHYYDVQVAAEFRCRGDDLLGIYADAIREQVDAMQHLRLQEDEFQWLSGLPFFKPDYLNWLREFRYNPDQVCVTNDNGKLHIRLTGPWREVIMWEVPLLAVISELVHHYRSPNAGVDQALDALESKLVDFTALTADLDMSRFHLMDFGTRRRFSREVQQAIVKRLQQESWFVGTSNYDLARRLALTPMGTQAHEWFQAHQQISPDLATSQRAALAAWLNEYPDQLGIALTDCITMDAFLRDFGIEFASRYQGLRHDSGDPVAWGEKAIAHYEKLGIDPLTKTLVFSDNLDLQKAVELYRHFASRVQLSFGIGTRLTCDIPQVKPLNIVIKLVECNGKPVAKLSDSPGKTICHDKAFVRALRKAFDLPQVRKAS.

Histidine 220 carries the post-translational modification Phosphohistidine; by autocatalysis.

This sequence belongs to the NAPRTase family. Post-translationally, transiently phosphorylated on a His residue during the reaction cycle. Phosphorylation strongly increases the affinity for substrates and increases the rate of nicotinate D-ribonucleotide production. Dephosphorylation regenerates the low-affinity form of the enzyme, leading to product release.

It catalyses the reaction nicotinate + 5-phospho-alpha-D-ribose 1-diphosphate + ATP + H2O = nicotinate beta-D-ribonucleotide + ADP + phosphate + diphosphate. It participates in cofactor biosynthesis; NAD(+) biosynthesis; nicotinate D-ribonucleotide from nicotinate: step 1/1. In terms of biological role, catalyzes the synthesis of beta-nicotinate D-ribonucleotide from nicotinate and 5-phospho-D-ribose 1-phosphate at the expense of ATP. This Salmonella heidelberg (strain SL476) protein is Nicotinate phosphoribosyltransferase.